The primary structure comprises 175 residues: Large ribosomal subunit protein uL10 (175 aa).

This sequence belongs to the universal ribosomal protein uL10 family. As to quaternary structure, part of the ribosomal stalk of the 50S ribosomal subunit. The N-terminus interacts with L11 and the large rRNA to form the base of the stalk. The C-terminus forms an elongated spine to which L12 dimers bind in a sequential fashion forming a multimeric L10(L12)X complex.

Its function is as follows. Forms part of the ribosomal stalk, playing a central role in the interaction of the ribosome with GTP-bound translation factors. In Synechococcus sp. (strain CC9902), this protein is Large ribosomal subunit protein uL10.